A 196-amino-acid chain; its full sequence is Peptidyl-tRNA hydrolase (196 aa).

Residue tyrosine 18 participates in tRNA binding. The active-site Proton acceptor is histidine 23. 3 residues coordinate tRNA: phenylalanine 69, asparagine 71, and asparagine 117.

This sequence belongs to the PTH family. In terms of assembly, monomer.

It is found in the cytoplasm. The catalysed reaction is an N-acyl-L-alpha-aminoacyl-tRNA + H2O = an N-acyl-L-amino acid + a tRNA + H(+). Hydrolyzes ribosome-free peptidyl-tRNAs (with 1 or more amino acids incorporated), which drop off the ribosome during protein synthesis, or as a result of ribosome stalling. Its function is as follows. Catalyzes the release of premature peptidyl moieties from peptidyl-tRNA molecules trapped in stalled 50S ribosomal subunits, and thus maintains levels of free tRNAs and 50S ribosomes. This chain is Peptidyl-tRNA hydrolase, found in Marinobacter nauticus (strain ATCC 700491 / DSM 11845 / VT8) (Marinobacter aquaeolei).